A 186-amino-acid polypeptide reads, in one-letter code: Ribulose bisphosphate carboxylase small subunit, chloroplastic 6 (186 aa).

A chloroplast-targeting transit peptide spans 1 to 60 (MASSMLSNAAVATTAASRSAGAQASMVAPFTGLKSVSAFPVTRKSSNDLSTVPSNGGKVQ).

It belongs to the RuBisCO small chain family. As to quaternary structure, heterohexadecamer of 8 large and 8 small subunits.

It is found in the plastid. The protein localises to the chloroplast. RuBisCO catalyzes two reactions: the carboxylation of D-ribulose 1,5-bisphosphate, the primary event in carbon dioxide fixation, as well as the oxidative fragmentation of the pentose substrate. Both reactions occur simultaneously and in competition at the same active site. Although the small subunit is not catalytic it is essential for maximal activity. This is Ribulose bisphosphate carboxylase small subunit, chloroplastic 6 from Mesembryanthemum crystallinum (Common ice plant).